A 624-amino-acid polypeptide reads, in one-letter code: Nif-specific regulatory protein (624 aa).

The GAF domain occupies 29 to 171 (DLQQTLREVL…MVANLIGQTV (143 aa)). The Sigma-54 factor interaction domain occupies 203–431 (VVCTSPNMLE…LENCIERAAT (229 aa)). ATP-binding positions include 231–238 (GESGTGKE) and 294–303 (ASGGTLFLDE). Residues 432-581 (QSRDGIIRTE…PLDEPESGSL (150 aa)) are inter-domain linker. A divalent metal cation-binding residues include Cys-445 and Cys-450. Disordered regions lie at residues 477 to 508 (VNRV…EPAG) and 549 to 578 (APAA…EPES). Residues 549–563 (APAAAAPAPTSVTNA) are compositionally biased toward low complexity. The C-terminal DNA-binding domain stretch occupies residues 582-624 (RDRLLWAMERTGWVQAKAARLLGMTTRQVSYALRKYNIEIKRF). The H-T-H motif DNA-binding region spans 596–615 (QAKAARLLGMTTRQVSYALR).

In terms of assembly, interacts with sigma-54.

Functionally, required for activation of most nif operons, which are directly involved in nitrogen fixation. This is Nif-specific regulatory protein (nifA) from Azospirillum lipoferum.